We begin with the raw amino-acid sequence, 364 residues long: Glycosyltransferase 8 domain-containing protein 1 (364 aa).

The Cytoplasmic portion of the chain corresponds to 1 to 5 (MRRVH). The chain crosses the membrane as a helical; Signal-anchor for type II membrane protein span at residues 6 to 26 (ITVILLAAVIFLLVLHHNILG). Residues 27 to 364 (LSDILKRQNS…QFSLIRRHAE (338 aa)) are Lumenal-facing. N-linked (GlcNAc...) asparagine glycans are attached at residues asparagine 102, asparagine 247, and asparagine 255.

Belongs to the glycosyltransferase 8 family.

It localises to the membrane. The sequence is that of Glycosyltransferase 8 domain-containing protein 1 (glt8d1) from Xenopus laevis (African clawed frog).